Reading from the N-terminus, the 200-residue chain is Large ribosomal subunit protein uL4 (200 aa).

The segment at Gly38 to Arg68 is disordered. Positions Gly54 to Gly65 are enriched in basic residues.

The protein belongs to the universal ribosomal protein uL4 family. Part of the 50S ribosomal subunit.

Functionally, one of the primary rRNA binding proteins, this protein initially binds near the 5'-end of the 23S rRNA. It is important during the early stages of 50S assembly. It makes multiple contacts with different domains of the 23S rRNA in the assembled 50S subunit and ribosome. Its function is as follows. Forms part of the polypeptide exit tunnel. The polypeptide is Large ribosomal subunit protein uL4 (Pseudomonas fluorescens (strain SBW25)).